Here is a 370-residue protein sequence, read N- to C-terminus: sn-glycerol-3-phosphate import ATP-binding protein UgpC (370 aa).

The ABC transporter domain maps to 4–236 (LSLKNIAKRY…PATAFVAAFM (233 aa)). 38-45 (GPSGCGKS) contacts ATP.

This sequence belongs to the ABC transporter superfamily. sn-glycerol-3-phosphate importer (TC 3.A.1.1.3) family. The complex is composed of two ATP-binding proteins (UgpC), two transmembrane proteins (UgpA and UgpE) and a solute-binding protein (UgpB).

Its subcellular location is the cell inner membrane. The enzyme catalyses sn-glycerol 3-phosphate(out) + ATP + H2O = sn-glycerol 3-phosphate(in) + ADP + phosphate + H(+). Functionally, part of the ABC transporter complex UgpBAEC involved in sn-glycerol-3-phosphate (G3P) import. Responsible for energy coupling to the transport system. The sequence is that of sn-glycerol-3-phosphate import ATP-binding protein UgpC from Chromobacterium violaceum (strain ATCC 12472 / DSM 30191 / JCM 1249 / CCUG 213 / NBRC 12614 / NCIMB 9131 / NCTC 9757 / MK).